The chain runs to 236 residues: Small ribosomal subunit protein uS3 (236 aa).

The KH type-2 domain occupies 39 to 107; that stretch reads IREFLTEELK…DTSLNIVEVR (69 aa). The tract at residues 214-236 is disordered; that stretch reads ASERRAVEGDNQGSSSNRRRENA.

Belongs to the universal ribosomal protein uS3 family. Part of the 30S ribosomal subunit. Forms a tight complex with proteins S10 and S14.

In terms of biological role, binds the lower part of the 30S subunit head. Binds mRNA in the 70S ribosome, positioning it for translation. This Brucella abortus (strain S19) protein is Small ribosomal subunit protein uS3.